A 369-amino-acid polypeptide reads, in one-letter code: Aminomethyltransferase (369 aa).

The protein belongs to the GcvT family. The glycine cleavage system is composed of four proteins: P, T, L and H.

It catalyses the reaction N(6)-[(R)-S(8)-aminomethyldihydrolipoyl]-L-lysyl-[protein] + (6S)-5,6,7,8-tetrahydrofolate = N(6)-[(R)-dihydrolipoyl]-L-lysyl-[protein] + (6R)-5,10-methylene-5,6,7,8-tetrahydrofolate + NH4(+). In terms of biological role, the glycine cleavage system catalyzes the degradation of glycine. In Synechococcus sp. (strain WH7803), this protein is Aminomethyltransferase.